Reading from the N-terminus, the 472-residue chain is E1B 55 kDa protein (472 aa).

Residues 1 to 90 (MERPNPSVGG…GQRGEKRKLE (90 aa)) form a disordered region. Residues 32–44 (RLLAGAASARSGS) are compositionally biased toward low complexity. Gly residues predominate over residues 45–57 (SAGGGGGGGGGGE). A phosphoserine mark is found at S468 and S469.

This sequence belongs to the adenoviridae E1B 55 kDa protein family. Interacts with host PML-4 and PML-5; this interaction promotes efficient subnuclear targeting of E1B-55K to PML nuclear bodies. Interacts with E4-ORF3 protein. Interacts with E4-ORF6 protein.

Its subcellular location is the host nucleus. The protein localises to the host cytoplasm. In terms of biological role, plays a major role to prevent cellular inhibition of viral genome replication. Assembles an SCF-like E3 ubiquitin ligase complex based on the cellular proteins ELOB, ELOC, CUL5 and RBX1, in cooperation with viral E4orf6. This viral RING-type ligase ubiquitinates cellular substrates and targets them to proteasomal degradation: TP53/p53, LIG4, MRE11-RAD50-NBS1 (MRN) complex, ITGA3, DAXX and BLM. E1B-55K probably acts as the substrate-specific adapter of the SCF-like E3 ubiquitin ligase complex. Degradation of host TP53/p53 activity is essential for preventing E1A-induced TP53 accumulation that would otherwise lead to cell apoptosis and growth arrest. E1B-55K also inactivates TP53 transcription-factor activity by binding its transactivation domain. E1B-55K also functions as a SUMO1 E3 ligase for TP53 which causes the latter to be sequestered in promyelocytic leukemia (PML) nuclear bodies thereby contributing to maximal inhibition of TP53 function. This Homo sapiens (Human) protein is E1B 55 kDa protein.